Reading from the N-terminus, the 290-residue chain is Diaminopimelate epimerase (290 aa).

Substrate is bound by residues Asn-14 and Asn-67. The Proton donor role is filled by Cys-76. Substrate-binding positions include 77 to 78, Asn-166, Asn-199, and 217 to 218; these read GN and ER. Cys-226 acts as the Proton acceptor in catalysis. Position 227-228 (227-228) interacts with substrate; that stretch reads GT.

Belongs to the diaminopimelate epimerase family. In terms of assembly, homodimer.

It localises to the cytoplasm. The enzyme catalyses (2S,6S)-2,6-diaminopimelate = meso-2,6-diaminopimelate. It participates in amino-acid biosynthesis; L-lysine biosynthesis via DAP pathway; DL-2,6-diaminopimelate from LL-2,6-diaminopimelate: step 1/1. In terms of biological role, catalyzes the stereoinversion of LL-2,6-diaminopimelate (L,L-DAP) to meso-diaminopimelate (meso-DAP), a precursor of L-lysine and an essential component of the bacterial peptidoglycan. This Geobacillus kaustophilus (strain HTA426) protein is Diaminopimelate epimerase.